We begin with the raw amino-acid sequence, 190 residues long: Small ribosomal subunit protein uS5 (190 aa).

The S5 DRBM domain maps to Ile-19–Val-82. The tract at residues Ser-161–Ala-190 is disordered. The span at Lys-169–Pro-179 shows a compositional bias: basic and acidic residues.

This sequence belongs to the universal ribosomal protein uS5 family. Part of the 30S ribosomal subunit. Contacts proteins S4 and S8.

Functionally, with S4 and S12 plays an important role in translational accuracy. Its function is as follows. Located at the back of the 30S subunit body where it stabilizes the conformation of the head with respect to the body. The sequence is that of Small ribosomal subunit protein uS5 from Granulibacter bethesdensis (strain ATCC BAA-1260 / CGDNIH1).